The chain runs to 614 residues: Zinc metalloproteinase-disintegrin-like VLAIP-B (614 aa).

Positions 1–20 (MMQVLLVTICLAVFPYQGSS) are cleaved as a signal peptide. The propeptide occupies 21–193 (IILESGNVND…KASQLNLTPE (173 aa)). Position 194 is a pyrrolidone carboxylic acid (Gln194). Residues 202–398 (KYVELVIVAD…KMPQCILNKP (197 aa)) enclose the Peptidase M12B domain. Residue Glu205 participates in Ca(2+) binding. The N-linked (GlcNAc...) asparagine glycan is linked to Asn262. Asp289 is a Ca(2+) binding site. Cystine bridges form between Cys313–Cys393, Cys353–Cys377, and Cys355–Cys360. Position 338 (His338) interacts with Zn(2+). The active site involves Glu339. 2 residues coordinate Zn(2+): His342 and His348. 8 residues coordinate Ca(2+): Cys393, Asn396, Val408, Asn411, Phe413, Glu415, Glu418, and Asp421. The Disintegrin domain occupies 406 to 492 (PAVCGNYFVE…ECPTDQFQRN (87 aa)). 14 cysteine pairs are disulfide-bonded: Cys409–Cys438, Cys420–Cys433, Cys422–Cys428, Cys432–Cys455, Cys446–Cys452, Cys451–Cys477, Cys464–Cys484, Cys471–Cys503, Cys496–Cys508, Cys515–Cys565, Cys530–Cys576, Cys543–Cys553, Cys560–Cys602, and Cys596–Cys607. Positions 470–472 (ECD) match the D/ECD-tripeptide motif. Asn505, Asn547, and Asn568 each carry an N-linked (GlcNAc...) asparagine glycan.

The protein belongs to the venom metalloproteinase (M12B) family. P-III subfamily. P-IIIc sub-subfamily. Heterodimer; disulfide-linked. It depends on Zn(2+) as a cofactor. The N-terminus is blocked. Expressed by the venom gland.

It is found in the secreted. Its activity is regulated as follows. Inhibited by EDTA or 1,10-phenanthroline. Not inhibited by PMSF. Its function is as follows. This metalloproteinase hydrolyzes azocasein, and insulin B-chain (at the '38-Ala-|-Leu-39' bond). Also hydrolyzes the Aalpha-chain (FGA) and more slowly the Bbeta-chain of fibrinogen (FGB), without affecting the gamma-chain. Cleaves alpha-chain of fibrinogen at '432-Lys-|-Leu-433' and '535-Pro-|-Met-536' bonds. Does not cleave fibrin. Inhibits endothelial cell adhesion to extracellular matrix proteins such as fibrinogen, fibronectin, vitronectin, collagen I, and collagen IV. Induces apoptosis in vascular endothelial cells. This Macrovipera lebetinus (Levantine viper) protein is Zinc metalloproteinase-disintegrin-like VLAIP-B.